A 310-amino-acid polypeptide reads, in one-letter code: Hairy/enhancer-of-split related with YRPW motif-like protein (310 aa).

Positions 1–21 are disordered; it reads MKRPHDYSSPDSDTDELIDVG. A compositionally biased stretch (acidic residues) spans 12–21; that stretch reads SDTDELIDVG. Residues 43-98 enclose the bHLH domain; sequence ARKKRRGIIEKRRRDRINHSLSELRRLVPSAFEKQGSSKLEKAEILQMTVDHLKLL. The region spanning 116–152 is the Orange domain; the sequence is YRTLGFRECVGEVVRYLSSLEGVESSDPIGARLVSHL. Composition is skewed to low complexity over residues 182-192 and 261-273; these read LQAASPPASST and PSSS…SSPP. Disordered regions lie at residues 182-208 and 248-310; these read LQAA…HGTA and HRLQ…IGAF. A compositionally biased stretch (polar residues) spans 293 to 302; sequence LSSSSKSAQA.

Belongs to the HEY family.

It is found in the nucleus. Functionally, transcriptional repressor which functions as a downstream effector of Notch signaling. This is Hairy/enhancer-of-split related with YRPW motif-like protein (heyl) from Danio rerio (Zebrafish).